We begin with the raw amino-acid sequence, 134 residues long: Calvin cycle protein CP12-3, chloroplastic (134 aa).

The tract at residues 1–21 (MISGSATASHGRVLLPSQRER) is disordered. The transit peptide at 1–42 (MISGSATASHGRVLLPSQRERRPVSTGSNILRFRETVPRQFS) directs the protein to the chloroplast. 2 cysteine pairs are disulfide-bonded: cysteine 78–cysteine 87 and cysteine 120–cysteine 129.

This sequence belongs to the CP12 family. Monomer. Component of a complex that contains two dimers of PRK, two tetramers of GAPDH and CP12. CP12 associates with GAPDH, causing its conformation to change. This GAPDH/CP12 complex binds PRK to form a half-complex (one unit). This unit probably dimerizes due partially to interactions between the enzymes of each unit. Contains two disulfide bonds; only the oxidized protein, with two disulfide bonds, is active in complex formation. The C-terminal disulfide is involved in the interaction with GAPDH and the N-terminal disulfide mediates the binding of PRK with this binary complex. Mostly expressed, at low levels, in stems and, to a lesser extent, in leaves and roots.

Its subcellular location is the plastid. The protein localises to the chloroplast. Its function is as follows. Acts as a linker essential in the assembly of a core complex of PRK/GAPDH. Coordinates the reversible inactivation of chloroplast enzymes GAPDH and PRK during darkness in photosynthetic tissues. This Arabidopsis thaliana (Mouse-ear cress) protein is Calvin cycle protein CP12-3, chloroplastic (CP12-3).